The chain runs to 180 residues: uncharacterized protein (180 aa).

The N-terminal stretch at 1-22 (MKLRFISSALAAALFAATGSYA) is a signal peptide. An intrachain disulfide couples Cys-41 to Cys-81.

It belongs to the fimbrial protein family.

The protein resides in the fimbrium. This is an uncharacterized protein from Escherichia coli O157:H7.